Here is a 158-residue protein sequence, read N- to C-terminus: Small ribosomal subunit protein uS15 (158 aa).

Over residues M1 to G10 the composition is skewed to basic residues. A disordered region spans residues M1 to D66. The span at D21 to A32 shows a compositional bias: acidic residues. Positions I33–H45 are enriched in basic and acidic residues.

It belongs to the universal ribosomal protein uS15 family. As to quaternary structure, part of the 30S ribosomal subunit.

The polypeptide is Small ribosomal subunit protein uS15 (Haloquadratum walsbyi (strain DSM 16790 / HBSQ001)).